A 1119-amino-acid chain; its full sequence is Leucine-rich repeats and immunoglobulin-like domains protein 3 (1119 aa).

Residues 1–24 form the signal peptide; it reads MSAPSLRARAAGLGLLLCAVLGRA. Residues 38–74 enclose the LRRNT domain; the sequence is PSGVAAERPCPTTCRCLGDLLDCSRKRLARLPEPLPS. 15 LRR repeats span residues 75-96, 99-120, 122-142, 146-167, 168-189, 193-214, 216-237, 240-261, 264-285, 288-309, 312-333, 336-357, 360-382, 387-408, and 411-432; these read WVARLDLSHNRLSFIKASSMSH, SLREVKLNNNELETIPNLGPVS, NITLLSLAGNRIVEILPEHLK, SLETLDLSSNNISELQTAFPAL, QLKYLYLNSNRVTSMEPGYFDN, TLLVLKLNRNRISAIPPKMFKL, QLQHLELNRNKIKNVDGLTFQG, ALKSLKMQRNGVTKLMDGAFWG, NMEILQLDHNNLTEITKGWLYG, MLQELHLSQNAINRISPDAWEF, KLSELDLTFNHLSRLDDSSFLG, LLNTLHIGNNRVSYIADCAFRG, SLKTLDLKNNEISWTIEDMNGAF, KLRRLILQGNRIRSITKKAFTG, and ALEHLDLSDNAIMSLQGNAFSQ. Residues Asn122 and Asn156 are each glycosylated (N-linked (GlcNAc...) asparagine). Asn274 is a glycosylation site (N-linked (GlcNAc...) asparagine). N-linked (GlcNAc...) asparagine glycans are attached at residues Asn442, Asn469, and Asn515. The 52-residue stretch at 444–495 folds into the LRRCT domain; it reads SSLLCDCQLKWLPQWVAENNFQSFVNASCAHPQLLKGRSIFAVSPDGFVCDD. 3 consecutive Ig-like C2-type domains span residues 499-598, 603-692, and 697-783; these read PQIT…AKLT, PSFT…ATLT, and PSFL…VRLS. Intrachain disulfides connect Cys520–Cys581 and Cys624–Cys676. Asn688 and Asn729 each carry an N-linked (GlcNAc...) asparagine glycan. Cys718 and Cys767 are joined by a disulfide. The helical transmembrane segment at 810-830 threads the bilayer; that stretch reads VVIIAVVCCVVGTSLVWVVII. Residues Asn905, Asn987, Asn999, and Asn1016 are each glycosylated (N-linked (GlcNAc...) asparagine). The tract at residues 1073–1093 is disordered; it reads SSPDLDSGSEEDGKERTDFQE. Residues 1083 to 1093 show a composition bias toward basic and acidic residues; sequence EDGKERTDFQE.

As to quaternary structure, interacts with EGFR, ERBB2 and ERBB4 (in vitro). In terms of tissue distribution, widely expressed.

The protein localises to the cell membrane. It is found in the cytoplasmic vesicle membrane. Its function is as follows. May play a role in craniofacial and inner ear morphogenesis during embryonic development. May act within the otic vesicle epithelium to control formation of the lateral semicircular canal in the inner ear, possibly by restricting the expression of NTN1. The sequence is that of Leucine-rich repeats and immunoglobulin-like domains protein 3 (LRIG3) from Homo sapiens (Human).